Reading from the N-terminus, the 303-residue chain is MFVQILGSAAGGGFPQWNCNCVNCAGFRDGSLRAQARTQSSIAISDDGVNWVLCNASPDIRAQLQGFAPMQPGRALRDTGISAIILMDSQIDHTTGLLSLREGCPHQVWCTDMVHEDLSTGFPLFTMLTHWNGGLAWNRIELDASFTIPACPNLRFTPLPLRSAAPPYSPHRFDPHPGDNIGLIVEDLRTGGKLFYAPGLGKVDAPLLEIMAGSDCLLVDGTMWDDDEMQRRGVGTRTGREMGHLAQNGPGGMLDVLEQLPEQRKVLIHINNTNPILDEDSPERAELVRRNVEVAYDGMSIEL.

This sequence belongs to the PqqB family.

It participates in cofactor biosynthesis; pyrroloquinoline quinone biosynthesis. May be involved in the transport of PQQ or its precursor to the periplasm. The chain is Coenzyme PQQ synthesis protein B from Pseudomonas fluorescens (strain SBW25).